The following is a 154-amino-acid chain: Transcriptional repressor NrdR (154 aa).

The segment at 3 to 34 is a zinc-finger region; the sequence is CPFCNAPDTKVIDSRLATEGAQVRRRRECMSC. The ATP-cone domain maps to 49–139; that stretch reads PRVIKSDGNR…VYRSFQDVNA (91 aa).

This sequence belongs to the NrdR family. Zn(2+) is required as a cofactor.

Its function is as follows. Negatively regulates transcription of bacterial ribonucleotide reductase nrd genes and operons by binding to NrdR-boxes. The protein is Transcriptional repressor NrdR of Hydrogenovibrio crunogenus (strain DSM 25203 / XCL-2) (Thiomicrospira crunogena).